Consider the following 666-residue polypeptide: Frizzled-3 (666 aa).

The signal sequence occupies residues 1–22; it reads MAMTWIVFSLWPLTVFMGHIGG. In terms of domain architecture, FZ spans 23 to 136; sequence HSLFSCEPIT…CSRFPDCDEP (114 aa). The Extracellular segment spans residues 23 to 205; the sequence is HSLFSCEPIT…REELSFARYF (183 aa). 5 disulfide bridges follow: Cys28/Cys89, Cys36/Cys82, Cys73/Cys110, Cys99/Cys133, and Cys103/Cys127. Asn42 is a glycosylation site (N-linked (GlcNAc...) asparagine). Residues 206 to 226 form a helical membrane-spanning segment; it reads IGLISIICLSATLFTFLTFLI. The Cytoplasmic segment spans residues 227 to 237; that stretch reads DVTRFRYPERP. Residues 238–258 traverse the membrane as a helical segment; it reads IIFYAVCYMMVSLIFFIGFLL. Over 259–288 the chain is Extracellular; it reads EDRVACNASIPAQYKASTVTQGSHNKACTM. A glycan (N-linked (GlcNAc...) asparagine) is linked at Asn265. The chain crosses the membrane as a helical span at residues 289–309; that stretch reads LFMILYFFTMAGSVWWVILTI. At 310–328 the chain is on the cytoplasmic side; the sequence is TWFLAAVPKWGSEAIEKKA. A helical membrane pass occupies residues 329–349; that stretch reads LLFHASAWGIPGTLTIILLAM. At 350–374 the chain is on the extracellular side; sequence NKIEGDNISGVCFVGLYDVDALRYF. Asn356 carries N-linked (GlcNAc...) asparagine glycosylation. A helical transmembrane segment spans residues 375 to 395; sequence VLAPLCLYVVVGVSLLLAGII. Topologically, residues 396-420 are cytoplasmic; it reads SLNRVRIEIPLEKENQDKLVKFMIR. Residues 421-441 form a helical membrane-spanning segment; it reads IGVFSILYLVPLLVVIGCYFY. Residues 442-477 lie on the Extracellular side of the membrane; that stretch reads EQAYRGIWETTWIQERCREYHIPCPYQVTQMSRPDL. A helical transmembrane segment spans residues 478 to 498; it reads ILFLMKYLMALIVGIPSVFWV. Topologically, residues 499–666 are cytoplasmic; that stretch reads GSKKTCFEWA…RVIEEDGTSA (168 aa). The Lys-Thr-X-X-X-Trp motif, mediates interaction with the PDZ domain of Dvl family members motif lies at 502–507; it reads KTCFEW. Positions 538-666 are disordered; that stretch reads RDPNTPIIRK…RVIEEDGTSA (129 aa). A compositionally biased stretch (polar residues) spans 550-565; the sequence is GTSTQGTSTHASSTQL. Over residues 617 to 638 the composition is skewed to basic and acidic residues; it reads LTDHSRHSSSHRLNEQSRHSSI. Polar residues predominate over residues 639 to 656; sequence RDLSNNPMTHITHGTSMN.

The protein belongs to the G-protein coupled receptor Fz/Smo family. In terms of assembly, interacts with VANGL2. Post-translationally, ubiquitinated by ZNRF3, leading to its degradation by the proteasome. Widely expressed. Relatively high expression in the CNS, including regions of the limbic system, in kidney, pancreas, skeletal muscle, uterus and testis.

It localises to the membrane. Its subcellular location is the cell membrane. It is found in the cell surface. The protein localises to the apical cell membrane. In terms of biological role, receptor for Wnt proteins. Most of frizzled receptors are coupled to the beta-catenin canonical signaling pathway, which leads to the activation of disheveled proteins, inhibition of GSK-3 kinase, nuclear accumulation of beta-catenin and activation of Wnt target genes. A second signaling pathway involving PKC and calcium fluxes has been seen for some family members, but it is not yet clear if it represents a distinct pathway or if it can be integrated in the canonical pathway, as PKC seems to be required for Wnt-mediated inactivation of GSK-3 kinase. Both pathways seem to involve interactions with G-proteins. Activation by Wnt5A stimulates PKC activity via a G-protein-dependent mechanism. Involved in transduction and intercellular transmission of polarity information during tissue morphogenesis and/or in differentiated tissues. Plays a role in controlling early axon growth and guidance processes necessary for the formation of a subset of central and peripheral major fiber tracts. Required for the development of major fiber tracts in the central nervous system, including: the anterior commissure, the corpus callosum, the thalamocortical, corticothalamic and nigrostriatal tracts, the corticospinal tract, the fasciculus retroflexus, the mammillothalamic tract, the medial lemniscus, and ascending fiber tracts from the spinal cord to the brain. In the peripheral nervous system, controls axon growth in distinct populations of cranial and spinal motor neurons, including the facial branchimotor nerve, the hypoglossal nerve, the phrenic nerve, and motor nerves innervating dorsal limbs. Involved in the migration of cranial neural crest cells. May also be implicated in the transmission of sensory information from the trunk and limbs to the brain. Controls commissural sensory axons guidance after midline crossing along the anterior-posterior axis in the developing spinal cord in a Wnt-dependent signaling pathway. Together with FZD6, is involved in the neural tube closure and plays a role in the regulation of the establishment of planar cell polarity (PCP), particularly in the orientation of asymmetric bundles of stereocilia on the apical faces of a subset of auditory and vestibular sensory cells located in the inner ear. Promotes neurogenesis by maintaining sympathetic neuroblasts within the cell cycle in a beta-catenin-dependent manner. The chain is Frizzled-3 (FZD3) from Homo sapiens (Human).